We begin with the raw amino-acid sequence, 264 residues long: H-2 class II histocompatibility antigen, E-B beta chain (264 aa).

Residues 1 to 26 form the signal peptide; sequence MVWLPRVPCVAAVILLLTVLSPPMAL. A beta-1 region spans residues 27–121; sequence VRDSRPWFLE…ISDKFLVRRR (95 aa). Residues 27–225 lie on the Extracellular side of the membrane; that stretch reads VRDSRPWFLE…KAQSTSAQNK (199 aa). 2 disulfides stabilise this stretch: C38–C106 and C144–C200. Residue N46 is glycosylated (N-linked (GlcNAc...) asparagine). A beta-2 region spans residues 122–225; sequence VEPTVTVYPT…KAQSTSAQNK (104 aa). The Ig-like C1-type domain occupies 124–214; that stretch reads PTVTVYPTKT…PSLTDPVTVE (91 aa). A helical transmembrane segment spans residues 226–246; sequence MLSGVGGFVLGLLFLGAGLFI. Over 247-264 the chain is Cytoplasmic; the sequence is YFRNQKGQSGLQPTGLLS.

It belongs to the MHC class II family. Post-translationally, ubiquitinated in immature dendritic cells leading to down-regulation of MHC class II.

The protein localises to the membrane. This is H-2 class II histocompatibility antigen, E-B beta chain (H2-Eb1) from Mus musculus (Mouse).